We begin with the raw amino-acid sequence, 261 residues long: MDRFLVKGAQGGLLRKQEEQEPTGEEPAVLGGDKESTRKRPRREAPGNGGHSAGPSWRHIRAEGLDCSYTVLFGKAEADEIFQELEKEVEYFTGALARVQVFGKWHSVPRKQATYGDAGLTYTFSGLTLSPKPWIPVLERIRDHVSGVTGQTFNFVLINRYKDGCDHIGEHRDDERELAPGSPIASVSFGACRDFVFRHKDSRGKSPSRRVAVVRLPLAHGSLLMMNHPTNTHWYHSLPVRKKVLAPRVNLTFRKILLTKK.

The segment at 1–57 is disordered; it reads MDRFLVKGAQGGLLRKQEEQEPTGEEPAVLGGDKESTRKRPRREAPGNGGHSAGPSW. The PCNA-binding signature appears at 3–7; the sequence is RFLVK. Residues 102-104 and 122-124 each bind substrate; these read FGK and YTF. One can recognise a Fe2OG dioxygenase domain in the interval 152–257; it reads TFNFVLINRY…RVNLTFRKIL (106 aa). Residues Asn159, Tyr161, and His171 each contribute to the 2-oxoglutarate site. His171 and Asp173 together coordinate Fe cation. Asp174 is a binding site for substrate. The 2-oxoglutarate site is built by His236, Arg248, Thr252, and Arg254. Residue His236 participates in Fe cation binding.

Belongs to the alkB family. In terms of assembly, interacts with PCNA homotrimer; this interaction is enhanced during the S-phase of the cell cycle. Interacts with nucleolar proteins NCL, UBTF and NPM1. Interacts with XRCC5-XRCC6 heterodimer. The cofactor is Fe(2+). Detected in colon, small intestine, ovary, testis, prostate, skeletal muscle, heart, liver and urinary bladder.

The protein localises to the nucleus. It is found in the nucleolus. Its subcellular location is the nucleoplasm. The enzyme catalyses a methylated nucleobase within DNA + 2-oxoglutarate + O2 = a nucleobase within DNA + formaldehyde + succinate + CO2. It catalyses the reaction an N(1)-methyl-2'-deoxyadenosine in double-stranded DNA + 2-oxoglutarate + O2 = a 2'-deoxyadenosine in double-stranded DNA + formaldehyde + succinate + CO2 + H(+). It carries out the reaction an N(1)-methyl-2'-deoxyadenosine in single-stranded DNA + 2-oxoglutarate + O2 = a 2'-deoxyadenosine in single-stranded DNA + formaldehyde + succinate + CO2 + H(+). The catalysed reaction is an N(3)-methyl-2'-deoxycytidine in double-stranded DNA + 2-oxoglutarate + O2 = a 2'-deoxycytidine in double-stranded DNA + formaldehyde + succinate + CO2 + H(+). The enzyme catalyses an N(3)-methyl-2'-deoxycytidine in single-stranded DNA + 2-oxoglutarate + O2 = a 2'-deoxycytidine in single-stranded DNA + formaldehyde + succinate + CO2 + H(+). It catalyses the reaction a 1,N(6)-etheno-2'-deoxyadenosine in double-stranded DNA + 2-oxoglutarate + O2 + H2O = a 2'-deoxyadenosine in double-stranded DNA + glyoxal + succinate + CO2. It carries out the reaction a 1,N(6)-etheno-2'-deoxyadenosine in single-stranded DNA + 2-oxoglutarate + O2 + H2O = a 2'-deoxyadenosine in single-stranded DNA + glyoxal + succinate + CO2. The catalysed reaction is a 3,N(4)-etheno-2'-deoxycytidine in double-stranded DNA + 2-oxoglutarate + O2 + H2O = a 2'-deoxycytidine in double-stranded DNA + glyoxal + succinate + CO2. The enzyme catalyses a 3,N(4)-etheno-2'-deoxycytidine in single-stranded DNA + 2-oxoglutarate + O2 + H2O = a 2'-deoxycytidine in single-stranded DNA + glyoxal + succinate + CO2. It catalyses the reaction a 1,N(2)-etheno-2'-deoxyguanosine in double-stranded DNA + 2-oxoglutarate + O2 + H2O = a 2'-deoxyguanosine in double-stranded DNA + glyoxal + succinate + CO2. With respect to regulation, activated by ascorbate and magnesium ions. Dioxygenase that repairs alkylated nucleic acid bases by direct reversal oxidative dealkylation. Can process both double-stranded (ds) and single-stranded (ss) DNA substrates, with a strong preference for dsDNA. Uses molecular oxygen, 2-oxoglutarate and iron as cofactors to oxidize the alkyl groups that are subsequently released as aldehydes, regenerating the undamaged bases. Probes the base pair stability, locates a weakened base pair and flips the damaged base to accommodate the lesion in its active site for efficient catalysis. Repairs monoalkylated bases, specifically N1-methyladenine and N3-methylcytosine, as well as higher order alkyl adducts such as bases modified with exocyclic bridged adducts known as etheno adducts including 1,N6-ethenoadenine, 3,N4-ethenocytosine and 1,N2-ethenoguanine. Acts as a gatekeeper of genomic integrity under alkylation stress. Efficiently repairs alkylated lesions in ribosomal DNA (rDNA). These lesions can cause ss- and dsDNA strand breaks that severely impair rDNA transcription. In a response mechanism to DNA damage, associates with PCNA at replication forks to repair alkylated adducts prior to replication. In Homo sapiens (Human), this protein is DNA oxidative demethylase ALKBH2 (ALKBH2).